The following is a 248-amino-acid chain: NLP effector protein Pc121494 (248 aa).

An N-terminal signal peptide occupies residues 1 to 19 (MKFIAVLIAAIASLSAVQA). Positions 124 to 130 (GHRNGWE) match the Hepta-peptide GHRHDWE motif motif. Asparagine 143 carries an N-linked (GlcNAc...) asparagine glycan.

The protein belongs to the Necrosis inducing protein (NPP1) family.

It is found in the secreted. Secreted effector that contributes strongly to virulence during infection by P.capsici. This Phytophthora capsici protein is NLP effector protein Pc121494.